The primary structure comprises 483 residues: MSYTIEGATGAWELVIGLEVHAQVISQSKLFSGAATAFGAEPNSQVSLVDAALPGMLPVLNRECVAQAVRTGLGLKAHINPVSRFDRKNYFYADLPQGYQISQFAHPIVGSGTIEIELQDGSTRQIGVTRLHLEQDAGKSLHDQDPTRSFIDLNRSGVALMEIVSEPDMRSPEEAGAYLRKLRTILRYLGTCDGNMEEGSMRADVNVSVRRAGEPFRTRCEIKNVNSIRYVMQAIEAEAKRQIAIWEEGEEVDQETRLFDPSRGETRSMRSKEDAHDYRYFPDPDLLPLVLDEDWIEGLKASLPELPDEKSARFVSEYGLTRYDAGVLVAEQASAHFFETVAKGRDARLAANYITGDLFAVLNRTGRSITDSPISAEALGGLLDLLADNTINGRIAKEVFEAMAETGEHPADIVEARGLRQVTDTGAIDTAVAQVLEANPDKLAEYRSGKDKLFGFFVGQVMKAMQGKGNPALVNEALKKALG.

The protein belongs to the GatB/GatE family. GatB subfamily. In terms of assembly, heterotrimer of A, B and C subunits.

The catalysed reaction is L-glutamyl-tRNA(Gln) + L-glutamine + ATP + H2O = L-glutaminyl-tRNA(Gln) + L-glutamate + ADP + phosphate + H(+). It catalyses the reaction L-aspartyl-tRNA(Asn) + L-glutamine + ATP + H2O = L-asparaginyl-tRNA(Asn) + L-glutamate + ADP + phosphate + 2 H(+). Its function is as follows. Allows the formation of correctly charged Asn-tRNA(Asn) or Gln-tRNA(Gln) through the transamidation of misacylated Asp-tRNA(Asn) or Glu-tRNA(Gln) in organisms which lack either or both of asparaginyl-tRNA or glutaminyl-tRNA synthetases. The reaction takes place in the presence of glutamine and ATP through an activated phospho-Asp-tRNA(Asn) or phospho-Glu-tRNA(Gln). The polypeptide is Aspartyl/glutamyl-tRNA(Asn/Gln) amidotransferase subunit B (Granulibacter bethesdensis (strain ATCC BAA-1260 / CGDNIH1)).